The sequence spans 539 residues: Netrin-G1 (539 aa).

An N-terminal signal peptide occupies residues 1–18; the sequence is MYLSRFLSIHALWVTVSS. 3 disulfides stabilise this stretch: cysteine 33-cysteine 50, cysteine 72-cysteine 92, and cysteine 80-cysteine 88. The region spanning 46–296 is the Laminin N-terminal domain; the sequence is DYTACQPEST…AISDIKVRGR (251 aa). The interval 80 to 91 is NGL discriminant loop I; that stretch reads CAMGNPYMCNNE. A glycan (N-linked (GlcNAc...) asparagine) is linked at asparagine 133. A disulfide bridge links cysteine 182 with cysteine 206. The NGL discriminant loop II stretch occupies residues 208 to 214; that stretch reads EEYSTGY. The tract at residues 273–275 is NGL discriminant loop III; it reads EIF. Intrachain disulfides connect cysteine 297–cysteine 306, cysteine 299–cysteine 315, cysteine 317–cysteine 326, cysteine 329–cysteine 354, cysteine 364–cysteine 373, cysteine 366–cysteine 384, cysteine 387–cysteine 396, cysteine 399–cysteine 417, cysteine 420–cysteine 432, cysteine 422–cysteine 438, cysteine 440–cysteine 449, cysteine 452–cysteine 462, and cysteine 488–cysteine 497. 3 consecutive Laminin EGF-like domains span residues 297–356, 364–419, and 420–469; these read CKCN…TCIP, CECF…VCIE, and CYCN…VCDN. N-linked (GlcNAc...) asparagine glycosylation is present at asparagine 320. An N-linked (GlcNAc...) asparagine glycan is attached at asparagine 406. N-linked (GlcNAc...) asparagine glycosylation occurs at asparagine 433. Serine 510 is lipidated: GPI-anchor amidated serine. A propeptide spans 511-539 (removed in mature form); it reads ESGQGAPPRGSPALLLLTMLLGTAGPLVF.

N-glycosylated. Expression is restricted primarily to neurons of the CNS, particularly in the dorsal thalamus, olfactory bulb and inferior colliculus. Isoform 1A and isoform 1D are the major products in adult brain.

It is found in the cell membrane. Involved in controlling patterning and neuronal circuit formation at the laminar, cellular, subcellular and synaptic levels. Promotes neurite outgrowth of both axons and dendrites. The sequence is that of Netrin-G1 (Ntng1) from Mus musculus (Mouse).